Here is an 868-residue protein sequence, read N- to C-terminus: MAHSDRQCTNAAQTALSDAVESARKHNNGFVDPAHLALVLFKNEDGLASRVLRKLNAGTVLEPLAARVGALPEQRPRPRSITFSSDGGCAQHRRAEANRVGDSLIAVDHLLIGLFECKEVEAIMKAAHASKKAVEGALLELRKGKKVTSEFQEENYQALEKYATDLCKLAEEGKLDPVIGRTDEVLRTIRVLSRRTKNNPILIGEPGVGKTAIAEGIAQRIVRGDVPDTLLNTRLFSLDLGALIAGSSLRGEFEERLKSVLNEVKESSNGVILFIDEIHLVLGAGKSGGSMDAANLLKPMLARGELRTIGATTLEEYRTYVEKDAAFERRFMPVYVTEPSVEECISILRGLKDRYEAHHGVQITDNAVVVAAQLANRYITNRFMPDKAIDLIDEACANVRVQLSSRPEAIDILERKKRQLEIEAKALERDKEAASRERLKLVKADIQRVEEELQPLVSKYNDERQRIDELQEMQSRLDEKKKLERAVRDGKMDLAADLQYNVIPLIQDRIRSLKEDIERQKATLVQEKVTEGDVAAVVARWTGIPVVKLSQTDRERLLNLSMHLHRRVKGQDEAVERVADAIIRARAGLSRPNSPTASFLFLGPTGVGKTELVKAVAAELFDDEKHMVRIDMSEYMEQHSVSRLIGAPPGYIGHDEGGQLTEPVRRRPHAVVLFDEVEKAHPNVYNVLLQVLDDGRLTDSRGRTVDFSNTIIVMTSNLGSEHLLNPEETNESYEVLRENVLAAVRSYFRPELINRLDDIVVFRRLRTEDLRGVVDNLIAGVNERLKSSGFSVLLDDGVKDFILEHGHDANMGARPLRRWIEKNIVTEIGRMLIAKELPPNSTLRVSLPEGGNKLTFGVKRGLTSDEWE.

Residues 4 to 144 form the Clp R domain; that stretch reads SDRQCTNAAQ…EGALLELRKG (141 aa). 2 repeat regions span residues 8 to 75 and 83 to 144; these read CTNA…PEQR and FSSD…LRKG. The interval 159–407 is i; the sequence is LEKYATDLCK…NVRVQLSSRP (249 aa). Residues 204–211 and 603–610 contribute to the ATP site; these read GEPGVGKT and GPTGVGKT. Residues 529–720 are II; it reads VTEGDVAAVV…IIVMTSNLGS (192 aa).

This sequence belongs to the ClpA/ClpB family.

The chain is Heat shock protein 100 (HSP100) from Trypanosoma brucei brucei.